Consider the following 128-residue polypeptide: Large ribosomal subunit protein bL19 (128 aa).

Belongs to the bacterial ribosomal protein bL19 family.

This protein is located at the 30S-50S ribosomal subunit interface and may play a role in the structure and function of the aminoacyl-tRNA binding site. The sequence is that of Large ribosomal subunit protein bL19 from Janthinobacterium sp. (strain Marseille) (Minibacterium massiliensis).